The sequence spans 427 residues: Trigger factor (427 aa).

Residues 163 to 248 (GDTVVIDFVG…VHEVKAKEVP (86 aa)) form the PPIase FKBP-type domain.

The protein belongs to the FKBP-type PPIase family. Tig subfamily.

The protein resides in the cytoplasm. The enzyme catalyses [protein]-peptidylproline (omega=180) = [protein]-peptidylproline (omega=0). Functionally, involved in protein export. Acts as a chaperone by maintaining the newly synthesized protein in an open conformation. Functions as a peptidyl-prolyl cis-trans isomerase. The sequence is that of Trigger factor from Streptococcus equi subsp. equi (strain 4047).